Reading from the N-terminus, the 575-residue chain is MLRQFFSYYKPYKTLFFLDFFSAIAGGLMELSFPLIVNYFIDTLLPGRDWGLIIATSIGLFAVYALSSALQYIVTYWGHMLGINIETDMRKSLFDHLQKLSFKFYDNNKTGTLMSKLTNDLMYIGEVAHHGPEDLFIAVMTILGAFGVMLFINWQLALLTFIIMPIVIWLALYFNKKMTKAFTTLNKDIGDFSARVENNIGGIRLVQAFGNEAFEKERFAVNNQRFRVTKLSSYKIMAKNGSISYMLTRFVTLFVLLCGTWFVIRGSLSYGEFVAFVLLTNVLFRPIDKINAIIEMYPRGIAGFKSYMELMETEPDIQDSPDSKDVSGLKGNIRYKHVSFGYDDHHNVLNDINLSIQAGETVAFVGPSGAGKSTLCSLLPRFYEASEGDITIDGISIKDMTLSSLRGQIGVVQQDVFLFSGTLRENIAYGRLGASEEDIWQAVKQAHLEELVHNMPDGLDTMIGERGVKLSGGQKQRLSIARMFLKNPSILILDEATSALDTETEAAIQKALQELSEGRTTLVIAHRLATIKDADRIVVVTNNGIEEQGRHQDLIEAGGLYSRLHQAQFGQMVHR.

The next 6 membrane-spanning stretches (helical) occupy residues 16–36 (FFLDFFSAIAGGLMELSFPLI), 50–70 (WGLIIATSIGLFAVYALSSAL), 132–152 (PEDLFIAVMTILGAFGVMLFI), 154–174 (WQLALLTFIIMPIVIWLALYF), 243–263 (ISYMLTRFVTLFVLLCGTWFV), and 264–284 (IRGSLSYGEFVAFVLLTNVLF). The 284-residue stretch at 16-299 (FFLDFFSAIA…INAIIEMYPR (284 aa)) folds into the ABC transmembrane type-1 domain. Residues 333–567 (IRYKHVSFGY…GGLYSRLHQA (235 aa)) form the ABC transporter domain. 366-373 (GPSGAGKS) is a binding site for ATP.

This sequence belongs to the ABC transporter superfamily.

The protein resides in the cell membrane. It localises to the membrane raft. This is an uncharacterized protein from Bacillus subtilis (strain 168).